A 424-amino-acid polypeptide reads, in one-letter code: Dihydroorotase (424 aa).

Residues His-58 and His-60 each contribute to the Zn(2+) site. Substrate-binding positions include 60–62, Asn-92, and Asn-276; that span reads HLR. Asp-303 is a Zn(2+) binding site. Residue Asp-303 is part of the active site. Substrate contacts are provided by residues His-307 and 321-322; that span reads FG.

This sequence belongs to the metallo-dependent hydrolases superfamily. DHOase family. Class I DHOase subfamily. The cofactor is Zn(2+).

It catalyses the reaction (S)-dihydroorotate + H2O = N-carbamoyl-L-aspartate + H(+). Its pathway is pyrimidine metabolism; UMP biosynthesis via de novo pathway; (S)-dihydroorotate from bicarbonate: step 3/3. In terms of biological role, catalyzes the reversible cyclization of carbamoyl aspartate to dihydroorotate. The sequence is that of Dihydroorotase from Staphylococcus aureus (strain COL).